The following is a 268-amino-acid chain: Protein APE_1980.1 (268 aa).

This sequence belongs to the CinA family.

In Aeropyrum pernix (strain ATCC 700893 / DSM 11879 / JCM 9820 / NBRC 100138 / K1), this protein is Protein APE_1980.1.